The sequence spans 356 residues: uncharacterized protein (356 aa).

The next 6 helical transmembrane spans lie at 2–22 (FEAIIYNISVMVAGIYLFHRL), 35–55 (EYVTVLMTFVSLLLAAYPIPF), 76–96 (NMIYTLTAAFIVSLVDVFIFG), 99–119 (IIYGITLIVIAGIVSAVGPFL), 124–144 (IISLLILNLISIIILLFLALL), and 151–171 (VEILVLIPISFIITIASAITF). The GGDEF domain maps to 218–353 (QSLALLLIDI…GRNKVMFNPI (136 aa)).

The protein localises to the cell membrane. This is an uncharacterized protein from Staphylococcus epidermidis (strain ATCC 35984 / DSM 28319 / BCRC 17069 / CCUG 31568 / BM 3577 / RP62A).